A 502-amino-acid polypeptide reads, in one-letter code: Arginine decarboxylase (502 aa).

Position 42 is an N6-(pyridoxal phosphate)lysine (Lys42). Residue 226 to 236 (IDIGGGLGIDY) participates in substrate binding.

Belongs to the Orn/Lys/Arg decarboxylase class-II family. SpeA subfamily. Requires pyridoxal 5'-phosphate as cofactor. Mg(2+) is required as a cofactor.

It catalyses the reaction L-arginine + H(+) = agmatine + CO2. It functions in the pathway amine and polyamine biosynthesis; agmatine biosynthesis; agmatine from L-arginine: step 1/1. In Solanum lycopersicum (Tomato), this protein is Arginine decarboxylase.